The chain runs to 277 residues: Large ribosomal subunit protein uL2 (277 aa).

The interval 219–277 (TVRGSVMNPNDHPHGGGEGRSPIGHPSPRTPWGKPALGYKTRKNKKYSDRFIVKRRHDK) is disordered.

Belongs to the universal ribosomal protein uL2 family. Part of the 50S ribosomal subunit. Forms a bridge to the 30S subunit in the 70S ribosome.

Functionally, one of the primary rRNA binding proteins. Required for association of the 30S and 50S subunits to form the 70S ribosome, for tRNA binding and peptide bond formation. It has been suggested to have peptidyltransferase activity; this is somewhat controversial. Makes several contacts with the 16S rRNA in the 70S ribosome. The polypeptide is Large ribosomal subunit protein uL2 (Clostridium botulinum (strain Okra / Type B1)).